The primary structure comprises 209 residues: NAD(P)H dehydrogenase (quinone) (209 aa).

The Flavodoxin-like domain maps to 4 to 199; that stretch reads VNIIFHSVHA…EMARYQGRHV (196 aa). Residues 10-15 and 87-89 contribute to the FMN site; these read SVHAHI and TRY. Residue W107 participates in substrate binding. Residues 122 to 128 and H143 contribute to the FMN site; that span reads SSGTQHG.

It belongs to the WrbA family. Requires FMN as cofactor.

It carries out the reaction a quinone + NADH + H(+) = a quinol + NAD(+). It catalyses the reaction a quinone + NADPH + H(+) = a quinol + NADP(+). This is NAD(P)H dehydrogenase (quinone) from Methanosarcina mazei (strain ATCC BAA-159 / DSM 3647 / Goe1 / Go1 / JCM 11833 / OCM 88) (Methanosarcina frisia).